A 180-amino-acid polypeptide reads, in one-letter code: Transmembrane protein 190 (180 aa).

The N-terminal stretch at 1–21 is a signal peptide; that stretch reads MVGSGIPALGLLLLMQGSADG. At 22–81 the chain is on the extracellular side; the sequence is NGIQGFFYPWSCEGDVWDRESCGGQAAIENPNLCLRLRCCYRDGVCYHQRPDENMRRKHM. In terms of domain architecture, P-type spans 31–71; the sequence is WSCEGDVWDRESCGGQAAIENPNLCLRLRCCYRDGVCYHQR. Disulfide bonds link Cys-33–Cys-61, Cys-43–Cys-60, and Cys-55–Cys-67. The chain crosses the membrane as a helical span at residues 82–102; the sequence is WALGWTCGGLLFLITSICLFW. Residues 103–180 are Cytoplasmic-facing; sequence WARRHDMLRL…EETEGGDEDD (78 aa). Residues 131–140 are compositionally biased toward basic and acidic residues; sequence KDRTPSEKKT. Residues 131–180 are disordered; the sequence is KDRTPSEKKTPSVGSIPPAAPTEGALDVSGGTEGEGTEGGEETEGGDEDD. Residues 165-180 show a composition bias toward acidic residues; it reads EGTEGGEETEGGDEDD.

It localises to the membrane. The protein is Transmembrane protein 190 (TMEM190) of Bos taurus (Bovine).